The chain runs to 181 residues: Type II secretion system protein H (181 aa).

Residues 1 to 5 (MRQRG) constitute a propeptide, leader sequence. Phe6 carries the N-methylphenylalanine modification. A helical transmembrane segment spans residues 6–29 (FTLLEIMLVVLLAGVAATLVMMAI).

Belongs to the GSP H family. Type II secretion is composed of four main components: the outer membrane complex, the inner membrane complex, the cytoplasmic secretion ATPase and the periplasm-spanning pseudopilus. Interacts with core component OutG. Cleaved by prepilin peptidase. Post-translationally, methylated by prepilin peptidase at the amino group of the N-terminal phenylalanine once the leader sequence is cleaved by prepilin peptidase.

The protein resides in the cell inner membrane. In terms of biological role, component of the type II secretion system required for the energy-dependent secretion of extracellular factors such as proteases and toxins from the periplasm. Part of the pseudopilus tip complex that is critical for the recognition and binding of secretion substrates. In Dickeya chrysanthemi (Pectobacterium chrysanthemi), this protein is Type II secretion system protein H (outH).